A 367-amino-acid polypeptide reads, in one-letter code: Mitochondrial distribution and morphology protein 34 (367 aa).

One can recognise an SMP-LTD domain in the interval 1–197; sequence MSFNFTWPEF…LPSIIHRLSQ (197 aa). 2 disordered regions span residues 267–311 and 347–367; these read QGLK…ALSS and PAHRPRSSRVHARQKRAFHLS. Positions 286-302 are enriched in polar residues; it reads FHTTSRVRVPSSLESNA.

It belongs to the MDM34 family. Component of the ER-mitochondria encounter structure (ERMES) or MDM complex, composed of MMM1, MDM10, MDM12 and MDM34.

The protein resides in the mitochondrion outer membrane. In terms of biological role, component of the ERMES/MDM complex, which serves as a molecular tether to connect the endoplasmic reticulum (ER) and mitochondria. Components of this complex are involved in the control of mitochondrial shape and protein biogenesis, and function in nonvesicular lipid trafficking between the ER and mitochondria. MDM34 is required for the interaction of the ER-resident membrane protein MMM1 and the outer mitochondrial membrane-resident beta-barrel protein MDM10. The sequence is that of Mitochondrial distribution and morphology protein 34 from Malassezia globosa (strain ATCC MYA-4612 / CBS 7966) (Dandruff-associated fungus).